The chain runs to 470 residues: Membrane-bound lytic murein transglycosylase F (470 aa).

Positions 1–24 are cleaved as a signal peptide; the sequence is MPSLKTKGAAGKFASLLLVLALSA. A non-LT domain region spans residues 25–262; that stretch reads CSRPAPPPET…RALERYFGHV (238 aa). An LT domain region spans residues 263 to 470; sequence KRLGSSDILG…RGEDGLPPPG (208 aa). Residue E309 is part of the active site.

It in the N-terminal section; belongs to the bacterial solute-binding protein 3 family. In the C-terminal section; belongs to the transglycosylase Slt family.

It localises to the cell outer membrane. It carries out the reaction Exolytic cleavage of the (1-&gt;4)-beta-glycosidic linkage between N-acetylmuramic acid (MurNAc) and N-acetylglucosamine (GlcNAc) residues in peptidoglycan, from either the reducing or the non-reducing ends of the peptidoglycan chains, with concomitant formation of a 1,6-anhydrobond in the MurNAc residue.. Its function is as follows. Murein-degrading enzyme that degrades murein glycan strands and insoluble, high-molecular weight murein sacculi, with the concomitant formation of a 1,6-anhydromuramoyl product. Lytic transglycosylases (LTs) play an integral role in the metabolism of the peptidoglycan (PG) sacculus. Their lytic action creates space within the PG sacculus to allow for its expansion as well as for the insertion of various structures such as secretion systems and flagella. The chain is Membrane-bound lytic murein transglycosylase F from Thiobacillus denitrificans (strain ATCC 25259 / T1).